Consider the following 430-residue polypeptide: MGQSVVVLGAQWGDEGKGKIVDLLTEEIGAVVRFQGGHNAGHTLVINGKKTVLHLIPSGILRDDALCLIGNGVVISPAALIKEVSELEDAGVEVRSRLKISPAAPLIMPYHIALDQAREKAAGGKAIGTTGRGIGPAYEDKVARRGIRIADLHYPPQLEELLRTALDYHNFVLTKYLGVEAVDFQKTYDEALAFGDYVQPMKSDVAGILHDLRKQGKRVLFEGAQGALLDIDHGTYPYVTSSNTTVGGALAGTGVGADAIDYVLGIAKAYATRVGGGPFPTELDDAVGQGIRDRGAEYGASTGRPRRCGWMDIVALKRAVAINGISGLCITKLDVLDGMEKLKVCIAYEYRGKRTEYAPLDAQGWEECTPVYLEFPGWTENTHGITEWDKLPVAARAYLRALEELAGCPISIVSTGPDRDHTMVLQDPFA.

GTP is bound by residues 13-19 and 41-43; these read GDEGKGK and GHT. The Proton acceptor role is filled by Asp-14. Mg(2+) is bound by residues Asp-14 and Gly-41. Residues 14 to 17, 39 to 42, Thr-130, Arg-144, Gln-225, Thr-240, and Arg-304 each bind IMP; these read DEGK and NAGH. The Proton donor role is filled by His-42. 300-306 is a binding site for substrate; it reads ASTGRPR. Residues Arg-306, 332-334, and 414-416 each bind GTP; these read KLD and STG.

The protein belongs to the adenylosuccinate synthetase family. In terms of assembly, homodimer. It depends on Mg(2+) as a cofactor.

The protein localises to the cytoplasm. The enzyme catalyses IMP + L-aspartate + GTP = N(6)-(1,2-dicarboxyethyl)-AMP + GDP + phosphate + 2 H(+). It functions in the pathway purine metabolism; AMP biosynthesis via de novo pathway; AMP from IMP: step 1/2. Plays an important role in the de novo pathway of purine nucleotide biosynthesis. Catalyzes the first committed step in the biosynthesis of AMP from IMP. In Xanthomonas oryzae pv. oryzae (strain MAFF 311018), this protein is Adenylosuccinate synthetase.